A 236-amino-acid polypeptide reads, in one-letter code: Probable glutathione S-transferase GSTU6 (236 aa).

The region spanning 5 to 84 (GELKLLGVWS…YIDEVWPGGA (80 aa)) is the GST N-terminal domain. Residues S15, K42, V56, and 68–69 (ES) contribute to the glutathione site. Residues 94-228 (DPYERAVARF…KLLEFRQTLL (135 aa)) form the GST C-terminal domain.

This sequence belongs to the GST superfamily. Tau family. In terms of tissue distribution, expressed in seedling shoots and roots.

The catalysed reaction is RX + glutathione = an S-substituted glutathione + a halide anion + H(+). Functionally, conjugation of reduced glutathione to a wide number of exogenous and endogenous hydrophobic electrophiles. The sequence is that of Probable glutathione S-transferase GSTU6 (GSTU6) from Oryza sativa subsp. japonica (Rice).